A 383-amino-acid polypeptide reads, in one-letter code: Protein phosphatase 2C homolog 4 (383 aa).

The region spanning serine 51–leucine 356 is the PPM-type phosphatase domain. 3 residues coordinate Mn(2+): aspartate 92, aspartate 308, and aspartate 347.

Belongs to the PP2C family. In terms of assembly, monomer. Requires Mg(2+) as cofactor. Mn(2+) is required as a cofactor.

It is found in the vacuole membrane. It catalyses the reaction O-phospho-L-seryl-[protein] + H2O = L-seryl-[protein] + phosphate. The catalysed reaction is O-phospho-L-threonyl-[protein] + H2O = L-threonyl-[protein] + phosphate. In terms of biological role, has a role in the regulation of vacuole fusion. This chain is Protein phosphatase 2C homolog 4 (ptc4), found in Schizosaccharomyces pombe (strain 972 / ATCC 24843) (Fission yeast).